A 151-amino-acid chain; its full sequence is Globin CTT-VIII (151 aa).

One can recognise a Globin domain in the interval 4-148; that stretch reads PMSADQLALF…MFFYILHALE (145 aa). Heme b-binding residues include His62 and His97.

Belongs to the globin family. As to quaternary structure, homodimer.

The polypeptide is Globin CTT-VIII (CTT-8) (Chironomus thummi thummi (Midge)).